Here is a 325-residue protein sequence, read N- to C-terminus: GMP reductase (325 aa).

Catalysis depends on cysteine 173, which acts as the Thioimidate intermediate. An NADP(+)-binding site is contributed by 202–225 (IIADGGIRHHGDIAKSVRFGAAMV).

It belongs to the IMPDH/GMPR family. GuaC type 2 subfamily.

The catalysed reaction is IMP + NH4(+) + NADP(+) = GMP + NADPH + 2 H(+). In terms of biological role, catalyzes the irreversible NADPH-dependent deamination of GMP to IMP. It functions in the conversion of nucleobase, nucleoside and nucleotide derivatives of G to A nucleotides, and in maintaining the intracellular balance of A and G nucleotides. The chain is GMP reductase from Leptothrix cholodnii (strain ATCC 51168 / LMG 8142 / SP-6) (Leptothrix discophora (strain SP-6)).